The following is a 556-amino-acid chain: Dihydroxy-acid dehydratase (556 aa).

Residue D78 coordinates Mg(2+). C119 contributes to the [2Fe-2S] cluster binding site. Mg(2+)-binding residues include D120 and K121. The residue at position 121 (K121) is an N6-carboxylysine. [2Fe-2S] cluster is bound at residue C191. E442 lines the Mg(2+) pocket. The Proton acceptor role is filled by S468.

This sequence belongs to the IlvD/Edd family. Homodimer. [2Fe-2S] cluster is required as a cofactor. The cofactor is Mg(2+).

It carries out the reaction (2R)-2,3-dihydroxy-3-methylbutanoate = 3-methyl-2-oxobutanoate + H2O. The enzyme catalyses (2R,3R)-2,3-dihydroxy-3-methylpentanoate = (S)-3-methyl-2-oxopentanoate + H2O. It functions in the pathway amino-acid biosynthesis; L-isoleucine biosynthesis; L-isoleucine from 2-oxobutanoate: step 3/4. The protein operates within amino-acid biosynthesis; L-valine biosynthesis; L-valine from pyruvate: step 3/4. Functions in the biosynthesis of branched-chain amino acids. Catalyzes the dehydration of (2R,3R)-2,3-dihydroxy-3-methylpentanoate (2,3-dihydroxy-3-methylvalerate) into 2-oxo-3-methylpentanoate (2-oxo-3-methylvalerate) and of (2R)-2,3-dihydroxy-3-methylbutanoate (2,3-dihydroxyisovalerate) into 2-oxo-3-methylbutanoate (2-oxoisovalerate), the penultimate precursor to L-isoleucine and L-valine, respectively. This is Dihydroxy-acid dehydratase from Caldanaerobacter subterraneus subsp. tengcongensis (strain DSM 15242 / JCM 11007 / NBRC 100824 / MB4) (Thermoanaerobacter tengcongensis).